The chain runs to 365 residues: N5-carboxyaminoimidazole ribonucleotide synthase (365 aa).

ATP is bound by residues arginine 102, lysine 143, 148–154 (GYDGKGQ), 177–180 (EEYV), glutamate 185, and 256–257 (NE). The region spanning 106–286 (KLFYRQHNLP…QFEQHLRAII (181 aa)) is the ATP-grasp domain.

This sequence belongs to the PurK/PurT family. In terms of assembly, homodimer.

It catalyses the reaction 5-amino-1-(5-phospho-beta-D-ribosyl)imidazole + hydrogencarbonate + ATP = 5-carboxyamino-1-(5-phospho-D-ribosyl)imidazole + ADP + phosphate + 2 H(+). The protein operates within purine metabolism; IMP biosynthesis via de novo pathway; 5-amino-1-(5-phospho-D-ribosyl)imidazole-4-carboxylate from 5-amino-1-(5-phospho-D-ribosyl)imidazole (N5-CAIR route): step 1/2. Catalyzes the ATP-dependent conversion of 5-aminoimidazole ribonucleotide (AIR) and HCO(3)(-) to N5-carboxyaminoimidazole ribonucleotide (N5-CAIR). In Saccharolobus solfataricus (strain ATCC 35092 / DSM 1617 / JCM 11322 / P2) (Sulfolobus solfataricus), this protein is N5-carboxyaminoimidazole ribonucleotide synthase.